A 155-amino-acid chain; its full sequence is DNA gyrase inhibitor (155 aa).

The protein belongs to the DNA gyrase inhibitor family. As to quaternary structure, interacts with DNA gyrase.

It is found in the cytoplasm. Its function is as follows. Inhibits the supercoiling activity of DNA gyrase. Acts by inhibiting DNA gyrase at an early step, prior to (or at the step of) binding of DNA by the gyrase. It protects cells against toxins that target DNA gyrase, by inhibiting activity of these toxins and reducing the formation of lethal double-strand breaks in the cell. This is DNA gyrase inhibitor from Erwinia billingiae (strain Eb661).